The sequence spans 348 residues: Probable purine nucleoside permease C285.05 (348 aa).

Residues 1 to 21 (MLFLKLVASVLALMTIVPAQA) form the signal peptide.

It belongs to the NUP family.

The protein localises to the endoplasmic reticulum. Probable nucleoside permease that transports adenosine and guanosine. This chain is Probable purine nucleoside permease C285.05, found in Schizosaccharomyces pombe (strain 972 / ATCC 24843) (Fission yeast).